We begin with the raw amino-acid sequence, 407 residues long: 3-oxoacyl-[acyl-carrier-protein] synthase 1 (407 aa).

Positions 1–405 constitute a Ketosynthase family 3 (KS3) domain; it reads MKRVVITGLG…GTNVSLIIKK (405 aa). Residues C164, H299, and H335 each act as for beta-ketoacyl synthase activity in the active site.

This sequence belongs to the thiolase-like superfamily. Beta-ketoacyl-ACP synthases family. As to quaternary structure, homodimer.

Its subcellular location is the cytoplasm. The enzyme catalyses a fatty acyl-[ACP] + malonyl-[ACP] + H(+) = a 3-oxoacyl-[ACP] + holo-[ACP] + CO2. It catalyses the reaction (3Z)-decenoyl-[ACP] + malonyl-[ACP] + H(+) = 3-oxo-(5Z)-dodecenoyl-[ACP] + holo-[ACP] + CO2. It functions in the pathway lipid metabolism; fatty acid biosynthesis. Its function is as follows. Involved in the type II fatty acid elongation cycle. Catalyzes the elongation of a wide range of acyl-ACP by the addition of two carbons from malonyl-ACP to an acyl acceptor. Can also use unsaturated fatty acids. Catalyzes a key reaction in unsaturated fatty acid (UFA) synthesis, the elongation of the cis-3-decenoyl-ACP produced by FabA. This is 3-oxoacyl-[acyl-carrier-protein] synthase 1 (fabB) from Buchnera aphidicola subsp. Baizongia pistaciae (strain Bp).